A 198-amino-acid chain; its full sequence is Recombination protein RecR (198 aa).

The C4-type zinc finger occupies 56–71 (CKICHSLTENEICDIC). The region spanning 79–174 (HLLCVVESPA…HMTRIAQGVP (96 aa)) is the Toprim domain.

Belongs to the RecR family.

Functionally, may play a role in DNA repair. It seems to be involved in an RecBC-independent recombinational process of DNA repair. It may act with RecF and RecO. This is Recombination protein RecR from Acinetobacter baylyi (strain ATCC 33305 / BD413 / ADP1).